The sequence spans 254 residues: Cytochrome c oxidase subunit 2 (254 aa).

The Mitochondrial intermembrane portion of the chain corresponds to 1 to 37; it reads MNNILNFYPAVITTDVAENWQIGFQDPATPIMEGIIN. Residues 38–58 traverse the membrane as a helical segment; the sequence is LHYDLMFFICVISVFVSWMLG. Residues 59–83 lie on the Mitochondrial matrix side of the membrane; sequence RTLWHFEQNQNKIPSSLTHGTLIEM. The helical transmembrane segment at 84–104 threads the bilayer; sequence IWTVTPAFILLIIAVPSFSLL. Residues 105 to 254 lie on the Mitochondrial intermembrane side of the membrane; the sequence is YAMDEIISPA…VSWISNKLNE (150 aa). Cu cation contacts are provided by H186, C221, E223, C225, H229, and M232. Mg(2+) is bound at residue E223.

It belongs to the cytochrome c oxidase subunit 2 family. As to quaternary structure, component of the cytochrome c oxidase (complex IV, CIV), a multisubunit enzyme composed of a catalytic core of 3 subunits and several supernumerary subunits. The complex exists as a monomer or a dimer and forms supercomplexes (SCs) in the inner mitochondrial membrane with ubiquinol-cytochrome c oxidoreductase (cytochrome b-c1 complex, complex III, CIII). It depends on Cu cation as a cofactor.

It localises to the mitochondrion inner membrane. The enzyme catalyses 4 Fe(II)-[cytochrome c] + O2 + 8 H(+)(in) = 4 Fe(III)-[cytochrome c] + 2 H2O + 4 H(+)(out). Functionally, component of the cytochrome c oxidase, the last enzyme in the mitochondrial electron transport chain which drives oxidative phosphorylation. The respiratory chain contains 3 multisubunit complexes succinate dehydrogenase (complex II, CII), ubiquinol-cytochrome c oxidoreductase (cytochrome b-c1 complex, complex III, CIII) and cytochrome c oxidase (complex IV, CIV), that cooperate to transfer electrons derived from NADH and succinate to molecular oxygen, creating an electrochemical gradient over the inner membrane that drives transmembrane transport and the ATP synthase. Cytochrome c oxidase is the component of the respiratory chain that catalyzes the reduction of oxygen to water. Electrons originating from reduced cytochrome c in the intermembrane space (IMS) are transferred via the dinuclear copper A center (CU(A)) of subunit 2 and heme A of subunit 1 to the active site in subunit 1, a binuclear center (BNC) formed by heme A3 and copper B (CU(B)). The BNC reduces molecular oxygen to 2 water molecules using 4 electrons from cytochrome c in the IMS and 4 protons from the mitochondrial matrix. The chain is Cytochrome c oxidase subunit 2 (COX2) from Chondrus crispus (Carrageen Irish moss).